A 375-amino-acid polypeptide reads, in one-letter code: Alanine racemase (375 aa).

K45 functions as the Proton acceptor; specific for D-alanine in the catalytic mechanism. K45 carries the post-translational modification N6-(pyridoxal phosphate)lysine. R141 contributes to the substrate binding site. Y270 functions as the Proton acceptor; specific for L-alanine in the catalytic mechanism. M318 serves as a coordination point for substrate.

It belongs to the alanine racemase family. Pyridoxal 5'-phosphate is required as a cofactor.

The enzyme catalyses L-alanine = D-alanine. The protein operates within amino-acid biosynthesis; D-alanine biosynthesis; D-alanine from L-alanine: step 1/1. Its function is as follows. Catalyzes the interconversion of L-alanine and D-alanine. May also act on other amino acids. This is Alanine racemase (alr) from Pseudoalteromonas atlantica (strain T6c / ATCC BAA-1087).